Consider the following 465-residue polypeptide: Glutamate--tRNA ligase (465 aa).

The 'HIGH' region motif lies at 8–18 (PSPTGYLHIGG). The short motif at 236–240 (RLSKR) is the 'KMSKS' region element. Position 239 (lysine 239) interacts with ATP.

Belongs to the class-I aminoacyl-tRNA synthetase family. Glutamate--tRNA ligase type 1 subfamily. As to quaternary structure, monomer.

The protein localises to the cytoplasm. The catalysed reaction is tRNA(Glu) + L-glutamate + ATP = L-glutamyl-tRNA(Glu) + AMP + diphosphate. Its function is as follows. Catalyzes the attachment of glutamate to tRNA(Glu) in a two-step reaction: glutamate is first activated by ATP to form Glu-AMP and then transferred to the acceptor end of tRNA(Glu). The chain is Glutamate--tRNA ligase from Nitrosospira multiformis (strain ATCC 25196 / NCIMB 11849 / C 71).